A 186-amino-acid polypeptide reads, in one-letter code: Large ribosomal subunit protein uL10 (186 aa).

Belongs to the universal ribosomal protein uL10 family. Part of the ribosomal stalk of the 50S ribosomal subunit. The N-terminus interacts with L11 and the large rRNA to form the base of the stalk. The C-terminus forms an elongated spine to which L12 dimers bind in a sequential fashion forming a multimeric L10(L12)X complex.

Forms part of the ribosomal stalk, playing a central role in the interaction of the ribosome with GTP-bound translation factors. This is Large ribosomal subunit protein uL10 (rplJ) from Streptomyces virginiae (Streptomyces cinnamonensis).